A 576-amino-acid chain; its full sequence is Alpha-1,3-arabinosyltransferase XAT3 (576 aa).

Residues methionine 1–arginine 19 are Cytoplasmic-facing. A helical; Signal-anchor for type II membrane protein transmembrane segment spans residues phenylalanine 20–serine 40. The Lumenal segment spans residues lysine 41–proline 576. The tract at residues isoleucine 64 to serine 171 is disordered. Composition is skewed to basic and acidic residues over residues glycine 73–proline 98, threonine 126–glutamine 138, and glycine 147–histidine 163. N-linked (GlcNAc...) asparagine glycans are attached at residues asparagine 172, asparagine 375, and asparagine 443.

This sequence belongs to the glycosyltransferase 61 family.

Its subcellular location is the golgi apparatus membrane. It functions in the pathway glycan metabolism. Glycosyltransferase involved in the arabinosylation of xylan, the major hemicellulose (non-cellulosic component) of primary and secondary walls of angiosperms. Possesses alpha-1,3-arabinosyltransferase activity, transferring an arabinofuranose residue to the xylan backbone. This Oryza sativa subsp. japonica (Rice) protein is Alpha-1,3-arabinosyltransferase XAT3.